Reading from the N-terminus, the 553-residue chain is Heterochromatin protein 1-binding protein 3 (553 aa).

At A2 the chain carries N-acetylalanine. Phosphoserine is present on S6. Disordered regions lie at residues 29–134 (KLGE…KTIP) and 140–159 (SASQ…SPRP). T51 is subject to Phosphothreonine. The span at 60–71 (GEEEKPEPDISS) shows a compositional bias: acidic residues. A Glycyl lysine isopeptide (Lys-Gly) (interchain with G-Cter in SUMO2) cross-link involves residue K64. T85 is subject to Phosphothreonine. The span at 94 to 127 (EQPKGEPENEEKEENKSSEETKKDEKDQSKEKEK) shows a compositional bias: basic and acidic residues. K97 participates in a covalent cross-link: Glycyl lysine isopeptide (Lys-Gly) (interchain with G-Cter in SUMO2). The segment covering 140–154 (SASQLARAQKQTPMA) has biased composition (polar residues). S142, S155, and S156 each carry phosphoserine. Residues 157 to 232 (PRPKMDAILT…GASGSFVVVQ (76 aa)) form the H15 1 domain. Position 190 is an N6-acetyllysine (K190). The interval 230–255 (VVQKSRKTPQKSRNRKNRSSAVDPEP) is disordered. Basic residues predominate over residues 233–247 (KSRKTPQKSRNRKNR). Phosphoserine occurs at positions 248 and 249. The short motif at 255 to 259 (PQVKL) is the PxVxL motif element. 2 consecutive H15 domains span residues 255–330 (PQVK…QLKK) and 337–413 (LGGS…QLCF). A Glycyl lysine isopeptide (Lys-Gly) (interchain with G-Cter in SUMO2) cross-link involves residue K258. A disordered region spans residues 422–553 (LFPKKEPDDS…TMKKSFRVKK (132 aa)). Positions 430–450 (DSRDEDEDEDESSEEDSEDEE) are enriched in acidic residues. Phosphoserine occurs at positions 441, 442, and 446. The segment covering 489–510 (GKARPLPKKAPPKAKTPAKKTR) has biased composition (basic residues). Residues 517-527 (KKPSGGSSKKP) show a composition bias toward low complexity. The span at 543–553 (STMKKSFRVKK) shows a compositional bias: basic residues.

As to quaternary structure, interacts (via PxVxL motif) with CBX5 (via Trp-174).

It is found in the nucleus. Its subcellular location is the chromosome. Component of heterochromatin that maintains heterochromatin integrity during G1/S progression and regulates the duration of G1 phase to critically influence cell proliferative capacity. Mediates chromatin condensation during hypoxia, leading to increased tumor cell viability, radio-resistance, chemo-resistance and self-renewal. In Homo sapiens (Human), this protein is Heterochromatin protein 1-binding protein 3 (HP1BP3).